A 394-amino-acid polypeptide reads, in one-letter code: 1-deoxy-D-xylulose 5-phosphate reductoisomerase (394 aa).

Residues T12, G13, S14, I15, G38, and N126 each contribute to the NADPH site. K127 serves as a coordination point for 1-deoxy-D-xylulose 5-phosphate. Position 128 (E128) interacts with NADPH. Mn(2+) is bound at residue D151. 1-deoxy-D-xylulose 5-phosphate contacts are provided by S152, E153, S177, and H200. E153 lines the Mn(2+) pocket. An NADPH-binding site is contributed by G206. 1-deoxy-D-xylulose 5-phosphate contacts are provided by S213, N218, K219, and E222. E222 is a binding site for Mn(2+).

This sequence belongs to the DXR family. Requires Mg(2+) as cofactor. Mn(2+) serves as cofactor.

It carries out the reaction 2-C-methyl-D-erythritol 4-phosphate + NADP(+) = 1-deoxy-D-xylulose 5-phosphate + NADPH + H(+). It participates in isoprenoid biosynthesis; isopentenyl diphosphate biosynthesis via DXP pathway; isopentenyl diphosphate from 1-deoxy-D-xylulose 5-phosphate: step 1/6. Its function is as follows. Catalyzes the NADPH-dependent rearrangement and reduction of 1-deoxy-D-xylulose-5-phosphate (DXP) to 2-C-methyl-D-erythritol 4-phosphate (MEP). This chain is 1-deoxy-D-xylulose 5-phosphate reductoisomerase, found in Beutenbergia cavernae (strain ATCC BAA-8 / DSM 12333 / CCUG 43141 / JCM 11478 / NBRC 16432 / NCIMB 13614 / HKI 0122).